A 156-amino-acid chain; its full sequence is uncharacterized protein (156 aa).

Transmembrane regions (helical) follow at residues 42-59, 79-98, and 105-127; these read LLMM…MTTV, ASFL…LLLY, and SLGR…VLGI.

The protein localises to the cell membrane. This is an uncharacterized protein from Archaeoglobus fulgidus (strain ATCC 49558 / DSM 4304 / JCM 9628 / NBRC 100126 / VC-16).